The sequence spans 337 residues: tRNA N6-adenosine threonylcarbamoyltransferase (337 aa).

Positions 111 and 115 each coordinate Fe cation. Residues 134-138 (LVSGG), aspartate 167, glycine 180, and asparagine 272 each bind substrate. Position 300 (aspartate 300) interacts with Fe cation.

The protein belongs to the KAE1 / TsaD family. Fe(2+) is required as a cofactor.

Its subcellular location is the cytoplasm. The enzyme catalyses L-threonylcarbamoyladenylate + adenosine(37) in tRNA = N(6)-L-threonylcarbamoyladenosine(37) in tRNA + AMP + H(+). In terms of biological role, required for the formation of a threonylcarbamoyl group on adenosine at position 37 (t(6)A37) in tRNAs that read codons beginning with adenine. Is involved in the transfer of the threonylcarbamoyl moiety of threonylcarbamoyl-AMP (TC-AMP) to the N6 group of A37, together with TsaE and TsaB. TsaD likely plays a direct catalytic role in this reaction. The sequence is that of tRNA N6-adenosine threonylcarbamoyltransferase from Klebsiella pneumoniae (strain 342).